The primary structure comprises 327 residues: Probable cell division protein WhiA (327 aa).

The H-T-H motif DNA-binding region spans 275-308 (SLEELGRLADPPMTKDAVAGRIRRLLSMADRKAK).

Belongs to the WhiA family.

In terms of biological role, involved in cell division and chromosome segregation. The polypeptide is Probable cell division protein WhiA (Mycobacterium bovis (strain ATCC BAA-935 / AF2122/97)).